The following is a 337-amino-acid chain: AP2/ERF and B3 domain-containing transcription factor At1g50680 (337 aa).

Residues 27–84 constitute a DNA-binding region (AP2/ERF); sequence KYKGVVQQQNGHWGAQIYADHKRIWLGTFKSADEAATAYDSASIKLRSFDANSHRNFP. The segment at residues 157–271 is a DNA-binding region (TF-B3); that stretch reads FQKELTPSDV…VKTLEGQRKN (115 aa).

It belongs to the AP2/ERF transcription factor family. RAV subfamily.

It is found in the nucleus. Functionally, probably acts as a transcriptional activator. Binds to the GCC-box pathogenesis-related promoter element. May be involved in the regulation of gene expression by stress factors and by components of stress signal transduction pathways. The sequence is that of AP2/ERF and B3 domain-containing transcription factor At1g50680 from Arabidopsis thaliana (Mouse-ear cress).